Here is a 219-residue protein sequence, read N- to C-terminus: Ribose-5-phosphate isomerase A (219 aa).

Residues T28–T31, D81–D84, and K94–G97 each bind substrate. E103 serves as the catalytic Proton acceptor. Residue K121 participates in substrate binding.

The protein belongs to the ribose 5-phosphate isomerase family. Homodimer.

The catalysed reaction is aldehydo-D-ribose 5-phosphate = D-ribulose 5-phosphate. The protein operates within carbohydrate degradation; pentose phosphate pathway; D-ribose 5-phosphate from D-ribulose 5-phosphate (non-oxidative stage): step 1/1. Its function is as follows. Catalyzes the reversible conversion of ribose-5-phosphate to ribulose 5-phosphate. The chain is Ribose-5-phosphate isomerase A from Edwardsiella ictaluri (strain 93-146).